The primary structure comprises 985 residues: Exocyst complex component 4 (985 aa).

The stretch at 36–70 (SETTEERQKEKQKIEAEFKRSDLRLNELVSRHDQQ) forms a coiled coil. Phosphoserine is present on residues Ser235, Ser456, Ser459, Ser682, and Ser686. The interval 434 to 480 (DKSSHVGTSNNSDAFKEHRRNASDASVDDNLAGQLGGSGKGSTSGLF) is disordered.

Belongs to the SEC8 family. The exocyst complex is composed of Sec3/Exoc1, Sec5/Exoc2, Sec6/Exoc3, Sec8/Exoc4, Sec10/Exoc5, Sec15/Exoc6, exo70/Exoc7 and Exo84/Exoc8. As to expression, abundant in the embryonic and larval glutamatergic neuromuscular junctions (NMJs), pre and postsynaptically.

Its function is as follows. Component of the exocyst complex involved in the docking of exocytic vesicles with fusion sites on the plasma membrane. Involved in regulation of synaptic microtubule formation, and also regulation of synaptic growth and glutamate receptor trafficking. Does not appear to be required for basal neurotransmission. The protein is Exocyst complex component 4 of Drosophila melanogaster (Fruit fly).